The chain runs to 395 residues: Glutamate N-acetyltransferase (395 aa).

Positions 146, 169, 180, 263, 390, and 395 each coordinate substrate. The active-site Nucleophile is the threonine 180.

Belongs to the ArgJ family. In terms of assembly, heterotetramer of two alpha and two beta chains.

The protein resides in the cytoplasm. The enzyme catalyses N(2)-acetyl-L-ornithine + L-glutamate = N-acetyl-L-glutamate + L-ornithine. It participates in amino-acid biosynthesis; L-arginine biosynthesis; L-ornithine and N-acetyl-L-glutamate from L-glutamate and N(2)-acetyl-L-ornithine (cyclic): step 1/1. In terms of biological role, catalyzes the transfer of the acetyl group from N(2)-acetylornithine to glutamate, forming N-acetylglutamate and L-ornithine. This chain is Glutamate N-acetyltransferase, found in Methanosarcina acetivorans (strain ATCC 35395 / DSM 2834 / JCM 12185 / C2A).